A 478-amino-acid polypeptide reads, in one-letter code: Putrescine oxidase (478 aa).

Residue 15–70 (RDVVVVGAGPAGLMAARTLVAAGRTVAVLEARDRVGGRTWSKTVDGAFLEIGGQWI) coordinates FAD.

Belongs to the flavin monoamine oxidase family. FAD serves as cofactor.

It carries out the reaction putrescine + O2 + H2O = 4-aminobutanal + H2O2 + NH4(+). The chain is Putrescine oxidase (puo) from Kocuria rosea (Deinococcus erythromyxa).